Reading from the N-terminus, the 609-residue chain is UvrABC system protein C (609 aa).

The region spanning 16–94 (SSAGVYRMYD…IKQYMPKYNV (79 aa)) is the GIY-YIG domain. Residues 203-238 (KQVISELVAKMEEAAGQQAYEQAARFRDQIMALRRV) enclose the UVR domain.

Belongs to the UvrC family. In terms of assembly, interacts with UvrB in an incision complex.

The protein localises to the cytoplasm. The UvrABC repair system catalyzes the recognition and processing of DNA lesions. UvrC both incises the 5' and 3' sides of the lesion. The N-terminal half is responsible for the 3' incision and the C-terminal half is responsible for the 5' incision. The chain is UvrABC system protein C from Shewanella sp. (strain ANA-3).